Reading from the N-terminus, the 100-residue chain is Proline-rich protein 15-like protein (100 aa).

The segment at 26–100 (PDTYTQSEGG…LFDDREGKGQ (75 aa)) is disordered. A compositionally biased stretch (basic and acidic residues) spans 53-62 (RLEKIVDKNT).

This sequence belongs to the PRR15 family.

In Bos taurus (Bovine), this protein is Proline-rich protein 15-like protein (PRR15L).